The chain runs to 215 residues: Adenylate kinase (215 aa).

Residue Gly-10–Thr-15 participates in ATP binding. Positions Ser-30–Val-59 are NMP. AMP contacts are provided by residues Thr-31, Arg-36, Gly-57 to Val-59, Gly-85 to Arg-88, and Gln-92. The segment at Gly-122 to Asp-159 is LID. Residues Arg-123 and Val-132–Tyr-133 contribute to the ATP site. 2 residues coordinate AMP: Arg-156 and Arg-167. Gly-201 contributes to the ATP binding site.

The protein belongs to the adenylate kinase family. Monomer.

It localises to the cytoplasm. It catalyses the reaction AMP + ATP = 2 ADP. It participates in purine metabolism; AMP biosynthesis via salvage pathway; AMP from ADP: step 1/1. Its function is as follows. Catalyzes the reversible transfer of the terminal phosphate group between ATP and AMP. Plays an important role in cellular energy homeostasis and in adenine nucleotide metabolism. This is Adenylate kinase from Pseudomonas fluorescens (strain ATCC BAA-477 / NRRL B-23932 / Pf-5).